Consider the following 92-residue polypeptide: PqqA binding protein (92 aa).

The protein belongs to the PqqD family. As to quaternary structure, monomer. Interacts with PqqE.

Its pathway is cofactor biosynthesis; pyrroloquinoline quinone biosynthesis. Its function is as follows. Functions as a PqqA binding protein and presents PqqA to PqqE, in the pyrroloquinoline quinone (PQQ) biosynthetic pathway. In Xanthomonas oryzae pv. oryzae (strain PXO99A), this protein is PqqA binding protein.